The following is a 425-amino-acid chain: Serine--tRNA ligase (425 aa).

Residue 230 to 232 (TAE) participates in L-serine binding. 261–263 (RAE) is a binding site for ATP. An L-serine-binding site is contributed by Glu284. 348-351 (EISS) is an ATP binding site. Position 384 (Ser384) interacts with L-serine.

It belongs to the class-II aminoacyl-tRNA synthetase family. Type-1 seryl-tRNA synthetase subfamily. As to quaternary structure, homodimer. The tRNA molecule binds across the dimer.

It is found in the cytoplasm. It catalyses the reaction tRNA(Ser) + L-serine + ATP = L-seryl-tRNA(Ser) + AMP + diphosphate + H(+). The enzyme catalyses tRNA(Sec) + L-serine + ATP = L-seryl-tRNA(Sec) + AMP + diphosphate + H(+). It participates in aminoacyl-tRNA biosynthesis; selenocysteinyl-tRNA(Sec) biosynthesis; L-seryl-tRNA(Sec) from L-serine and tRNA(Sec): step 1/1. In terms of biological role, catalyzes the attachment of serine to tRNA(Ser). Is also able to aminoacylate tRNA(Sec) with serine, to form the misacylated tRNA L-seryl-tRNA(Sec), which will be further converted into selenocysteinyl-tRNA(Sec). The sequence is that of Serine--tRNA ligase from Zymomonas mobilis subsp. mobilis (strain ATCC 31821 / ZM4 / CP4).